Here is a 538-residue protein sequence, read N- to C-terminus: Beta-1-syntrophin (538 aa).

Position 2 is an N-acetylalanine (alanine 2). PH domains are found at residues 19–298 (RAQR…SNVN) and 322–433 (EIRH…QGCH). Residues serine 87, serine 126, and serine 205 each carry the phosphoserine modification. The PDZ domain maps to 112–195 (GVKVLKQELG…EVLLEVKYMR (84 aa)). The segment at 205 to 237 (SPVSEIGWETPPPESPRLGGSTSDPPSSQSFSF) is disordered. Position 214 is a phosphothreonine (threonine 214). Phosphoserine is present on residues serine 219, serine 232, serine 236, and serine 389. Over residues 225 to 236 (STSDPPSSQSFS) the composition is skewed to low complexity. Residues 482–538 (PYEKLKMSSDDGIRMLYLDFGGKDGEIQLDLHSCPKPIVFIIHSFLSAKITRLGLVA) enclose the SU domain. Positions 518–538 (PIVFIIHSFLSAKITRLGLVA) are calmodulin-binding.

The protein belongs to the syntrophin family. In terms of assembly, monomer and homodimer. Interacts with the other members of the syntrophin family SNTA1 and SNTB2; with the sodium channel proteins SCN4A and SCN5A. Interacts with the viral HTLV-1 TAX protein and with dystrophin protein DMD and related proteins DTNA and UTRN. Interacts with DTNB. Phosphorylated by CaM-kinase II. As to expression, ubiquitous.

It is found in the cell membrane. It localises to the sarcolemma. The protein resides in the cell junction. Its subcellular location is the cytoplasm. The protein localises to the cytoskeleton. Functionally, adapter protein that binds to and probably organizes the subcellular localization of a variety of membrane proteins. May link various receptors to the actin cytoskeleton and the dystrophin glycoprotein complex. The sequence is that of Beta-1-syntrophin (SNTB1) from Homo sapiens (Human).